Consider the following 822-residue polypeptide: Anaphase-promoting complex subunit 2 (822 aa).

Residues Ser218, Ser314, Ser470, Ser534, and Ser697 each carry the phosphoserine modification. The segment at 450–495 (GDLAVELSKTDPASLETGQDSEDDSGEPEDWVPDPVDADPGKSSSK) is disordered. The segment covering 468–481 (QDSEDDSGEPEDWV) has biased composition (acidic residues). The interval 502–700 (ISLLVSIYGS…LLRRRMSVWL (199 aa)) is cullin homology. Tyr810 is modified (phosphotyrosine).

Belongs to the cullin family. As to quaternary structure, the mammalian APC/C is composed at least of 14 distinct subunits ANAPC1, ANAPC2, CDC27/APC3, ANAPC4, ANAPC5, CDC16/APC6, ANAPC7, CDC23/APC8, ANAPC10, ANAPC11, CDC26/APC12, ANAPC13, ANAPC15 and ANAPC16 that assemble into a complex of at least 19 chains with a combined molecular mass of around 1.2 MDa; APC/C interacts with FZR1 and FBXO5. In the context of the APC/C complex, directly interacts with UBE2C and UBE2S. Interacts (via cullin domain) with ANAPC11 and with UBCH10. Interacts with NEUROD2. Interacts with FBXO43; the interaction is direct.

It participates in protein modification; protein ubiquitination. Its function is as follows. Together with the RING-H2 protein ANAPC11, constitutes the catalytic component of the anaphase promoting complex/cyclosome (APC/C), a cell cycle-regulated E3 ubiquitin ligase that controls progression through mitosis and the G1 phase of the cell cycle. The APC/C complex acts by mediating ubiquitination and subsequent degradation of target proteins: it mainly mediates the formation of 'Lys-11'-linked polyubiquitin chains and, to a lower extent, the formation of 'Lys-48'- and 'Lys-63'-linked polyubiquitin chains. The APC/C complex catalyzes assembly of branched 'Lys-11'-/'Lys-48'-linked branched ubiquitin chains on target proteins. The CDC20-APC/C complex positively regulates the formation of synaptic vesicle clustering at active zone to the presynaptic membrane in postmitotic neurons. CDC20-APC/C-induced degradation of NEUROD2 drives presynaptic differentiation. The protein is Anaphase-promoting complex subunit 2 (ANAPC2) of Homo sapiens (Human).